The sequence spans 2352 residues: Highly reducing polyketide synthase ZEA2 (2352 aa).

Residues P9–A433 enclose the Ketosynthase family 3 (KS3) domain. Catalysis depends on for beta-ketoacyl synthase activity residues C181, H316, and H356. A malonyl-CoA:ACP transacylase (MAT) domain region spans residues F544–V875. Catalysis depends on S634, which acts as the For malonyltransferase activity. The segment at R923 to N1058 is N-terminal hotdog fold. The 320-residue stretch at R923 to A1242 folds into the PKS/mFAS DH domain. A dehydratase (DH) domain region spans residues I925–E1237. Catalysis depends on H955, which acts as the Proton acceptor; for dehydratase activity. Residues P1086–A1242 are C-terminal hotdog fold. The Proton donor; for dehydratase activity role is filled by D1152. Residues G1643–L1955 are enoylreductase (ER) domain. The tract at residues A1979–D2159 is catalytic ketoreductase (KRc) domain. In terms of domain architecture, Carrier spans K2269 to S2346. S2306 is subject to O-(pantetheine 4'-phosphoryl)serine.

It participates in mycotoxin biosynthesis. Highly reducing polyketide synthase; part of the gene cluster that mediates the biosynthesis of zearalenone (ZEA), a nonsteroid estrogen that is a contaminant of cereal grains and causes estrogenic disorders in humans and animals. The ZEA backbone is synthesized from a single acetyl-CoA molecule and eight malonyl-CoA molecules. The reducing polyketide synthase ZEA2 is proposed to synthesize a reduced hexaketide intermediate by using different combinations of its reductive domains during each round of condensation. The hexaketide thioester is then transacylated to the non-reducing polyketide synthase ZEA1 and is further condensed with three malonyl-CoAs without reductive tailoring to yield a mixed reduced/unreduced nonaketide. ZEA1 must be able to interact with ZEA2 to facilitate starter-unit acyltransfer and initiate polyketide biosynthesis. ZEA1 also mediates the required C2-C7 cyclization to form the resorcylate core and catalyzes the formation of the macrolactone. ZEB1 is then responsible for the chemical conversion of beta-zearalenonol (beta-ZOL) to ZEA in the biosynthetic pathway. The chain is Highly reducing polyketide synthase ZEA2 from Gibberella zeae (strain ATCC MYA-4620 / CBS 123657 / FGSC 9075 / NRRL 31084 / PH-1) (Wheat head blight fungus).